We begin with the raw amino-acid sequence, 580 residues long: Membrane protein insertase YidC (580 aa).

The next 6 helical transmembrane spans lie at 5-25 (SVTGLALIALIMIVWLQFMSP), 259-279 (KYFVAALIPAGPTGGFYLDGS), 362-382 (GLIIIIFAFLIKLVTYPLSLA), 427-447 (LGGCLPVVLQMPLLFAMFYVF), 477-497 (IPMYGDHIALMPILMAGTVFV), and 513-533 (IMLYMFPAMMLLFFNNMPSGL).

Belongs to the OXA1/ALB3/YidC family. Type 1 subfamily. In terms of assembly, interacts with the Sec translocase complex via SecD. Specifically interacts with transmembrane segments of nascent integral membrane proteins during membrane integration.

It localises to the cell inner membrane. Its function is as follows. Required for the insertion and/or proper folding and/or complex formation of integral membrane proteins into the membrane. Involved in integration of membrane proteins that insert both dependently and independently of the Sec translocase complex, as well as at least some lipoproteins. Aids folding of multispanning membrane proteins. This Chlorobium phaeovibrioides (strain DSM 265 / 1930) (Prosthecochloris vibrioformis (strain DSM 265)) protein is Membrane protein insertase YidC.